A 156-amino-acid polypeptide reads, in one-letter code: Small ribosomal subunit protein uS7 (156 aa).

The protein belongs to the universal ribosomal protein uS7 family. In terms of assembly, part of the 30S ribosomal subunit. Contacts proteins S9 and S11.

Its function is as follows. One of the primary rRNA binding proteins, it binds directly to 16S rRNA where it nucleates assembly of the head domain of the 30S subunit. Is located at the subunit interface close to the decoding center, probably blocks exit of the E-site tRNA. This Methylibium petroleiphilum (strain ATCC BAA-1232 / LMG 22953 / PM1) protein is Small ribosomal subunit protein uS7.